The chain runs to 255 residues: F-box/SPRY domain-containing protein 1 (255 aa).

In terms of domain architecture, F-box spans 3–51 (DRVAALCNYNVLEVVFSYLDLNDLGRCSQVCKSWFHFLNDENSDVWRFH). The 193-residue stretch at 61 to 253 (TKSELLSPVP…VSMVYCGTPL (193 aa)) folds into the B30.2/SPRY domain.

The protein belongs to the FBXO45/Fsn family. As to quaternary structure, component of an E3 ubiquitin ligase complex composed of hiw and Fsn.

The protein localises to the synapse. The protein operates within protein modification; protein ubiquitination. Required in the presynaptic motoneuron to down-regulate the levels of wnd and restrain synaptic terminal growth at the neuromuscular junction (NMJ). In Drosophila persimilis (Fruit fly), this protein is F-box/SPRY domain-containing protein 1.